We begin with the raw amino-acid sequence, 251 residues long: Aliphatic sulfonates import ATP-binding protein SsuB (251 aa).

In terms of domain architecture, ABC transporter spans glycine 19 to arginine 238. Glycine 51–serine 58 provides a ligand contact to ATP.

This sequence belongs to the ABC transporter superfamily. Aliphatic sulfonates importer (TC 3.A.1.17.2) family. As to quaternary structure, the complex is composed of two ATP-binding proteins (SsuB), two transmembrane proteins (SsuC) and a solute-binding protein (SsuA).

It is found in the cell membrane. It carries out the reaction ATP + H2O + aliphatic sulfonate-[sulfonate-binding protein]Side 1 = ADP + phosphate + aliphatic sulfonateSide 2 + [sulfonate-binding protein]Side 1.. Functionally, part of the ABC transporter complex SsuABC involved in aliphatic sulfonates import. Responsible for energy coupling to the transport system. The chain is Aliphatic sulfonates import ATP-binding protein SsuB from Mycobacterium avium (strain 104).